The chain runs to 187 residues: dTTP/UTP pyrophosphatase (187 aa).

Asp-64 (proton acceptor) is an active-site residue.

It belongs to the Maf family. YhdE subfamily. It depends on a divalent metal cation as a cofactor.

The protein localises to the cytoplasm. It carries out the reaction dTTP + H2O = dTMP + diphosphate + H(+). The catalysed reaction is UTP + H2O = UMP + diphosphate + H(+). Nucleoside triphosphate pyrophosphatase that hydrolyzes dTTP and UTP. May have a dual role in cell division arrest and in preventing the incorporation of modified nucleotides into cellular nucleic acids. The chain is dTTP/UTP pyrophosphatase from Leptospira interrogans serogroup Icterohaemorrhagiae serovar Lai (strain 56601).